The primary structure comprises 809 residues: Trimethylamine-N-oxide reductase 2 (809 aa).

The tat-type signal signal peptide spans 1-31 (MTLTRREFIKHSGIAAGALVVTSAAPLPAWA). Position 176 (Ser176) interacts with Mo-bis(molybdopterin guanine dinucleotide).

It belongs to the prokaryotic molybdopterin-containing oxidoreductase family. Mo-bis(molybdopterin guanine dinucleotide) serves as cofactor. Post-translationally, predicted to be exported by the Tat system. The position of the signal peptide cleavage has not been experimentally proven.

It is found in the periplasm. The enzyme catalyses trimethylamine + 2 Fe(III)-[cytochrome c] + H2O = trimethylamine N-oxide + 2 Fe(II)-[cytochrome c] + 3 H(+). Functionally, reduces trimethylamine-N-oxide (TMAO) into trimethylamine; an anaerobic reaction coupled to energy-yielding reactions. Can also reduce other N- and S-oxide compounds such as 4-methylmorpholine-N-oxide and biotin sulfoxide (BSO), but with a lower catalytic efficiency. The sequence is that of Trimethylamine-N-oxide reductase 2 (torZ) from Escherichia coli O157:H7.